The primary structure comprises 509 residues: Subtelomeric hrmA-associated cluster protein AFUB_078990 (509 aa).

In terms of biological role, part of the subtelomeric hrmA-associated cluster (HAC) containing genes that alter the hyphal surface (such as reduced total chitin or increased beta-glucan exposure) and perturb inter-hyphal interactions within the developing biofilms, resulting in a loss of vertically aligned polarized growing filaments. Consequently, this hypoxia-typic morphotype (called H-MORPH) with altered biofilm architecture leads to increased hypoxia fitness, increased host inflammation, rapid disease progression, and mortality in a murine model of invasive aspergillosis. This chain is Subtelomeric hrmA-associated cluster protein AFUB_078990, found in Aspergillus fumigatus (strain CBS 144.89 / FGSC A1163 / CEA10) (Neosartorya fumigata).